A 557-amino-acid chain; its full sequence is 2-isopropylmalate synthase (557 aa).

In terms of domain architecture, Pyruvate carboxyltransferase spans 31-304 (PTWCSVDLRD…DPGLNFASML (274 aa)). Mg(2+) is bound by residues D40, H243, H245, and N279. The tract at residues 439 to 557 (IENPIKFLNF…NTMIKDSAAV (119 aa)) is regulatory domain.

It belongs to the alpha-IPM synthase/homocitrate synthase family. LeuA type 2 subfamily. In terms of assembly, homodimer. It depends on Mg(2+) as a cofactor.

Its subcellular location is the cytoplasm. It carries out the reaction 3-methyl-2-oxobutanoate + acetyl-CoA + H2O = (2S)-2-isopropylmalate + CoA + H(+). It participates in amino-acid biosynthesis; L-leucine biosynthesis; L-leucine from 3-methyl-2-oxobutanoate: step 1/4. Catalyzes the condensation of the acetyl group of acetyl-CoA with 3-methyl-2-oxobutanoate (2-ketoisovalerate) to form 3-carboxy-3-hydroxy-4-methylpentanoate (2-isopropylmalate). The protein is 2-isopropylmalate synthase of Desulfitobacterium hafniense (strain Y51).